The following is a 1048-amino-acid chain: Selenate reductase subunit A (1048 aa).

A signal peptide (tat-type signal) is located at residues 1 to 39 (MENQHQKFISRRNFIKTSALLGGTAFLGTGLPNIKKTYS). Positions 56–129 (ENILYSACLQ…AGIQHAYDPY (74 aa)) constitute a 4Fe-4S Mo/W bis-MGD-type domain. Residues C63, C66, C70, and C115 each contribute to the [4Fe-4S] cluster site. Mo-bis(molybdopterin guanine dinucleotide) is bound at residue C270.

Belongs to the prokaryotic molybdopterin-containing oxidoreductase family. In terms of assembly, the complex is composed of three subunits: SrdA, SrdB and SrdC. It depends on [4Fe-4S] cluster as a cofactor. The cofactor is Mo-bis(molybdopterin guanine dinucleotide). Predicted to be exported by the Tat system. The position of the signal peptide cleavage has not been experimentally proven.

The protein localises to the secreted. The enzyme catalyses selenite + a quinone + H2O = selenate + a quinol. Functionally, component of the respiratory selenate reductase complex, which catalyzes the reduction of selenate to selenite. SrdA is probably the catalytic subunit that reduces selenate. This chain is Selenate reductase subunit A, found in Mesobacillus selenatarsenatis (strain DSM 18680 / JCM 14380 / FERM P-15431 / SF-1).